Consider the following 372-residue polypeptide: Lectin/endochitinase 1 (372 aa).

Residues 1–23 (MMMRFLSAVVIMSSAMAVGLVSA) form the signal peptide. Substrate is bound at residue Gln-24. Gln-24 is modified (pyrrolidone carboxylic acid). Chitin-binding type-1 domains are found at residues 24–64 (QRCG…KCWS) and 69–111 (DHRC…RCSS). Cystine bridges form between Cys-26-Cys-41, Cys-35-Cys-47, Cys-40-Cys-54, and Cys-58-Cys-62. 42 to 53 (SIWGWCGDSEPY) lines the substrate pocket. A Zn(2+)-binding site is contributed by His-70. 4 disulfide bridges follow: Cys-72–Cys-87, Cys-81–Cys-93, Cys-86–Cys-100, and Cys-105–Cys-109. His-90 is a Zn(2+) binding site. Residues 113–128 (VRGPRVALSGNSTANS) are spacer. Asn-123 carries an N-linked (GlcNAc...) asparagine glycan. Residues 129–372 (IGNVVVTEPL…FQRIQMRVAA (244 aa)) form a chitinase region.

As to quaternary structure, monomer and homodimer. Zinc favors dimerization. Active in the monomeric form but probably inactive in the dimeric form. The interaction with glycans on the mammalian TCR and MHC molecules of the T-cell and antigen-presenting cell, respectively, is inhibited by oligomers of GlcNAc. Proteolytically processed to yield a very small protein (8.5 kDa, 86 AA) containing only the two chitin-binding domains. Rhizomes and inflorescence with immature seeds.

The enzyme catalyses Random endo-hydrolysis of N-acetyl-beta-D-glucosaminide (1-&gt;4)-beta-linkages in chitin and chitodextrins.. Its function is as follows. Functions both as a chitinase and as a N-acetyl-D-glucosamine binding lectin. Inhibits the growth of several phytopathogenic chitin-containing fungi. Also possesses insecticidal activity and superantigenic properties. This is Lectin/endochitinase 1 (UDA1) from Urtica dioica (Great nettle).